We begin with the raw amino-acid sequence, 140 residues long: Large ribosomal subunit protein uL13 (140 aa).

Part of the 50S ribosomal subunit.

Functionally, this protein is one of the early assembly proteins of the 50S ribosomal subunit, although it is not seen to bind rRNA by itself. It is important during the early stages of 50S assembly. The protein is Large ribosomal subunit protein uL13 of Thermus thermophilus (strain ATCC 27634 / DSM 579 / HB8).